A 2533-amino-acid chain; its full sequence is MAGEYSTAPMAIIGMACRFSGGATSPEKLWDMIVQRRSGWSEIPTSRFNANGLYHPNGERVGTTHVKGGHFLEDDIACFDAAFFGMASETASAMDPQYRMELEVVYEALESAGIPMESIKGTNTSVYGGVMFRDYHDTHSRDLDTLPRYFMTGNAATMASNRISHFYDLRGPSMTVDTGCSTSLTALHLACQNLRSGESNMSIVTGASLMINPDVFLSMSNIGFLSPDGISYAFDSRANGYGRGEGVGALLVKRLDDALRDGDSIRAIIRETGVNQNGKTPSITAPQQAAQEALIRQCYERVNLDPAQTTYVEAHGTGTPAGDPLEVGALAAALGGSRSAEHPLYLGSIKANIGHTEAASGVASIIKVALALEKGQIPPNTQLNTPNSELRLNDRNMEVPVSTQRWPVGKGPRRASVNNFGFGGSNAHAILESPPVENGANRTNGQLKSNGPVVNGNKTNITKRETPWVFRLSAKDAQTCQQMAADLSTYIESHPPVDEEAFLGRLAYTLGSRRSVFSWTAAVSARSLAELTRALDDDERLVPSRAAPSLRLGWVFTGQGAQWYAMGRELIATYPVFRSTILECDRYMTEMGSTWTLMEELHREESTSQVNNIVYSLGLATAIQIALVELLWSWGIHPTAVTGHSSGEIAAAYASKALDMKSAIGIAYLRGVLAEKFDDKILGKGGMMAVGLGRKPVEHYLSRVTAGYCVVACVNSQYSVTISGDIPAIDQLEQLLQEDQVFARRLRVNGAFHCEQMRPMADLFDWSLRYLLTPHPDFGSVLFSSPKTGSRIQDGTILATSSHWVGNMLQAVEFESSFRHMCFGDPSPKGAKGTQDVDLVLEIGPHGALGGPIQQLMTLPEFEGSGISYLPTLVRKQDAVFAMQRLAIDLTHRGYPVDLNAVNFPHGTLSLSILHDLPSYPWNHSTRYWLEPRRNRADRQRQAPPSDLVGYSQPSITPLARTWRHIIRLSDLPWLGDHRVQSSIVFPGAGLVSMAIEGMRQVAAGRQQTVSAYELRDVDIAKALTVPEADEGVEVQLNIRPCDEQMLGTKDWLAFQIFSVSGDSRWTEHCSGRISVITTSDSTPLPSAIPSQSEDLYNRRIDPRYMWAAMRSVGIYHGPLFQNIHQVLAKPSASRTIFAIADTAAVMPKKYQTPHVLHPTTLDSVFQAAYTLLPESGARLPSAMVPRHIRSVRVSAQISNSPAHELEAYATLNRDYDAQSFETSLTVVDAKDGNSPVLEVDGLTCQSLGRALDREADPHENEICSRWEWAPDIGTLDAAACKDRIRCAPEAAEIETMRDLRRATILYILDIVSSLTVADVQQLRGHLKKFYVWMVEQLKKASRNQFAPDSAQWRDISAADKAALYEKVGRTSVNGEMLCRLGPLGASFLRQEMAPLEVMLENRLLFRYYLEALKWDRSTRQVSELVRLCTHKNPRAKILEIGAGTGGGTQVILEALGKENGSSTGARFGRYDFTDISAGFFEAAKERFQDWADLMNFQKLDIEHDPVAQGFEEGSYDVVIACQVLHATKSMDRTLTHVRKLLKPGGKLILMETTRDELDVFFAFGLLPGWWLSEEEERRTTPSLTLPFWNQVLSRNGFAGLDLEVHDCDSEEFYAFSTILSTAQAPALSITSPVTIVTGTSPPPTSWMSELQTAVAAHIGCQPVIATLETVTPQGNICIFLGEADEPLLDHVSNPVEFDRIIHLATRCKGLLWITRGGSLDVDKPAMSLSQGLLRTLKSEYQGKSFVSLDVDPRRSPWTAEVVQAISQIFPASFSETTDPATCEFEYAERDGVLHIPRTVKDIPMNRNIFPESDTTEKTIHCRFRDAARPLRMKIGTPGLIDTLVFHDDLDAKSDPLPADWIEFDPTAFGLNFRDVMVAMGQLEANAIMGFECAGTIVRLGATAAAKGFAVGDRVCTLLRGHWATRPRAPWTSVMRIPQHLSDQEAASFPTVFATAYIALHETARLQRGESILIHAATGGVGQAAIQLAQLIGAEIYATASTPAKRQLLHETYGIPENNIFSSRDPSFATDVHLRTDGRGVDVVLNSLAGRLLQESFNCLAEFGRMVEIGKRDLEQHSGLDMYPFTRNVSFSSVDLLTWQSRRGADISCVLQSLSKLLGEKKIMPVYPLTLYPITQIEKAFRTMQTGQHMGKIIISVGEQDTVPVVERPPPFSLRSDASYVIVGGLGGIGRVLCEWMMARGARHLIIISRNARPGPFVTELEQQGCEVRTLACDIAAEDQLAAALAQCADMPPIKGVIQGAMVLKDTVLEQMTVGDFEAAVRPKAQGSWNLHQQLGDVDFFIMLSSLMGVMGAASQANYAAGGAFQDALATYRRNRGLPAVSLDLGIVRSVGFVAQTDGVQERLVQMGVTSLSEETVLRILEQAITHPTGPPQIITGINTAPGKHWDEASWIQDPRFAALRYRDSTQAGSSRATTGTAKQGKIRDQLAEIASPVDAAALICQELMQKLASMFGLVVEEMSATQDLSSYGVDSLVAVELRNWLVAQVGAEVSIFDLMQSPSLEDLSLRVATKRT.

The 427-residue stretch at 7–433 (TAPMAIIGMA…GSNAHAILES (427 aa)) folds into the Ketosynthase family 3 (KS3) domain. Active-site for beta-ketoacyl synthase activity residues include C180, H315, and H355. Residues 554–821 (WVFTGQGAQW…VEFESSFRHM (268 aa)) form a malonyl-CoA:ACP transacylase (MAT) domain region. Positions 946–1081 (SDLVGYSQPS…GRISVITTSD (136 aa)) are N-terminal hotdog fold. Residues 946–1254 (SDLVGYSQPS…CQSLGRALDR (309 aa)) form the PKS/mFAS DH domain. Residues 947–1251 (DLVGYSQPSI…GLTCQSLGRA (305 aa)) form a dehydratase (DH) domain region. The active-site Proton acceptor; for dehydratase activity is the H978. The segment at 1097–1254 (YNRRIDPRYM…CQSLGRALDR (158 aa)) is C-terminal hotdog fold. The active-site Proton donor; for dehydratase activity is D1163. The interval 1419-1554 (TRQVSELVRL…GGKLILMETT (136 aa)) is methyltransferase (CMet) domain. An enoyl reductase (ER) domain region spans residues 1839–2155 (GLIDTLVFHD…TGQHMGKIII (317 aa)). The ketoreductase (KR) domain stretch occupies residues 2178–2349 (ASYVIVGGLG…AVSLDLGIVR (172 aa)). Positions 2455 to 2532 (DAAALICQEL…DLSLRVATKR (78 aa)) constitute a Carrier domain. An O-(pantetheine 4'-phosphoryl)serine modification is found at S2492.

The protein operates within secondary metabolite biosynthesis. In terms of biological role, highly reducing polyketide synthase; part of the gene cluster that mediates the biosynthesis of azaphilones, a class of fungal metabolites characterized by a highly oxygenated pyrano-quinone bicyclic core and exhibiting a broad range of bioactivities. In the first step, the non-reducing polyketide synthase azaA forms the hexaketide precursor from successive condensations of five malonyl-CoA units, presumably with a simple acetyl-CoA starter unit. The reactive polyketide chain then undergoes a PT-mediated C2-C7 cyclization to afford the aromatic ring and is eventually released as an aldehyde through the R-domain. The putative ketoreductase azaE is proposed to catalyze the reduction of the terminal ketone resulting in the early culture product FK17-P2a. The monooxygenase azaH was demonstrated to be the only enzyme required to convert FK17-P2a to azanigerone E. AzaH first hydroxylates the benzaldehyde intermediate FK17-P2a at C4, which triggers the formation of the pyran-ring to afford azanigerone E. In parallel, the 2,4-dimethylhexanoyl chain is synthesized by the HR-PKS azaB and is proposed to be transferred to the C4-hydroxyl of azanigerone E by the acyltransferase azaD directly from the ACP domain of azaB. Alternatively, the 2,4-dimethyl-hexanoyl chain may be offloaded from the HR-PKS as a carboxylic acid and converted to an acyl-CoA by azaF. The resulting acyl-CoA molecule could then be taken up as a substrate by AzaD to form azanigerone B. To yield the carboxylic acid substituent in azanigerone A, the hydroxypropyl side chain of azanigerone B would need to undergo a C-C oxidative cleavage catalyzed by cytochrome P450 AzaI. AzaI is proposed to act on a vicinal diol that leads to a C-C bond scission either through an alkoxyradical intermediate or a peroxy complex. In the biosynthesis of azanigerone A, azanigerone B first undergoes hydroxylation at C10, possibly catalyzed by one of the two FAD-dependent monooxygenases encoded in the cluster, azaG or azaL, resulting in the vicinal diol azanigerone C. Oxidative cleavage of azanigerone C by azaI would yield the corresponding aldehyde derivative of azanigerone A. Finally, the dehydrogenase azaJ is proposed to convert the aldehyde functional group into the carboxylic acid, completing the conversion from azanigerone B to azanigerone A. Alternatively, the oxidation of aldehyde to carboxylic acid may be catalyzed by the same P450 enzyme azaI via consecutive oxidation or by endogenous alcohol dehydrogenase. This Aspergillus niger (strain ATCC 1015 / CBS 113.46 / FGSC A1144 / LSHB Ac4 / NCTC 3858a / NRRL 328 / USDA 3528.7) protein is Highly reducing polyketide synthase azaB.